Consider the following 249-residue polypeptide: Pleckstrin homology domain-containing family F member 2 (249 aa).

The 97-residue stretch at 35 to 131 (VLIGEGVLTK…WMNHINKCVS (97 aa)) folds into the PH domain. An FYVE-type zinc finger spans residues 152-212 (DSEATVCMRC…ICDSCYDLLS (61 aa)). Zn(2+)-binding residues include cysteine 158, cysteine 161, cysteine 175, cysteine 178, cysteine 183, cysteine 186, cysteine 204, and cysteine 207. Polar residues predominate over residues 219–232 (CQSTRSDSYSQSPK). Residues 219 to 249 (CQSTRSDSYSQSPKSSLNDASDDDDDEDSSD) are disordered. A compositionally biased stretch (acidic residues) spans 238–249 (ASDDDDDEDSSD).

The protein resides in the early endosome membrane. Its subcellular location is the endoplasmic reticulum. Functionally, may play a role in early endosome fusion upstream of RAB5, hence regulating receptor trafficking and fluid-phase transport. Enhances cellular sensitivity to TNF-induced apoptosis. This Gallus gallus (Chicken) protein is Pleckstrin homology domain-containing family F member 2 (PLEKHF2).